Here is a 156-residue protein sequence, read N- to C-terminus: uncharacterized protein (156 aa).

The protein belongs to the mimivirus L223/L227/L812 family.

This is an uncharacterized protein from Acanthamoeba polyphaga mimivirus (APMV).